Consider the following 133-residue polypeptide: Minor capsid protein VP2 (133 aa).

Belongs to the vesivirus VP2 protein family. Homooligomer. The portal-like structure consists in 12 copies of VP2. Interacts with capsid protein VP1.

It localises to the virion. It is found in the host cytoplasm. Functionally, minor structural protein that forms a portal-like structure at a unique three-fold axis of symmetry, following binding to the host receptor. The channel formed by VP2 may allow the delivery of the viral genome through the host endosomal membrane. The protein is Minor capsid protein VP2 of Canis lupus familiaris (Dog).